The primary structure comprises 284 residues: 2-dehydro-3-deoxyphosphooctonate aldolase (284 aa).

The protein belongs to the KdsA family.

Its subcellular location is the cytoplasm. It carries out the reaction D-arabinose 5-phosphate + phosphoenolpyruvate + H2O = 3-deoxy-alpha-D-manno-2-octulosonate-8-phosphate + phosphate. Its pathway is carbohydrate biosynthesis; 3-deoxy-D-manno-octulosonate biosynthesis; 3-deoxy-D-manno-octulosonate from D-ribulose 5-phosphate: step 2/3. It functions in the pathway bacterial outer membrane biogenesis; lipopolysaccharide biosynthesis. This chain is 2-dehydro-3-deoxyphosphooctonate aldolase, found in Escherichia fergusonii (strain ATCC 35469 / DSM 13698 / CCUG 18766 / IAM 14443 / JCM 21226 / LMG 7866 / NBRC 102419 / NCTC 12128 / CDC 0568-73).